A 389-amino-acid polypeptide reads, in one-letter code: Zip homologous protein 3 (389 aa).

The RING-type zinc-finger motif lies at 6 to 43; it reads CNKCFNRKPPDGFFISSCFHIFCTKCAKADLAVCLICK. A coiled-coil region spans residues 123 to 164; the sequence is LAEATAWIQMAEKKLQASEEERVKAEREIEECQAKLKSMTNL. Residues 366 to 389 are disordered; that stretch reads ISSQPGYLAQRKPINGRSFIGPAD.

Interacts with zhp-4; the interaction is required for their localization along paired chromosomes and stability, and for the formation of chiasma during meiotic recombination. In terms of tissue distribution, expressed througout the gonad (at protein level). Expressed in the germline.

The protein resides in the chromosome. Its function is as follows. Recruited co-dependently with zhp-4 to the synaptonemal complex between homologous chromosome pairs to regulate the formation and number of crossover events between homologs during meiotic recombination. In the early stages of pachytene, in complex with zhp-4, recruited by the zhp-1-zhp-2 heterodimer to designated crossover sites along the homolog pair to stabilize other pro-crossover factors such as rmh-1, msh-5 and cosa-1. This in turn facilitates crossover and promotes the formation of chiasma in each meiotic nucleus at the late pachytene stage of meiosis. Plays a role in the segregation of homologous chromosomes following the completion of crossovers. Together with him-14 and msh-5 plays a role in the activation of DNA damage-dependent apoptosis at the DNA damage checkpoint in pachytene cells. The sequence is that of Zip homologous protein 3 from Caenorhabditis elegans.